Reading from the N-terminus, the 225-residue chain is MSCSKSMVLGYWDIRGLAHAIRMLLEFTDTSYEEKQYTCGEAPDYDRSQWLDVKFKLDLDFPNLPYLMDGKNKITQSNAILRYIARKHNMCGDTEEEKIRVDIMENQIMDFRMQLVRLCYNSNHESLKPQYLEQLPAQLKQFSLFLGKFTWFAGEKLTFVDFLTYDVLDQNRMFEPKCLDEFPNLKAFMCRFEALEKIAAFLQSDRCFKMPINNKMAKWGNKSIC.

The GST N-terminal domain maps to 5-92 (KSMVLGYWDI…YIARKHNMCG (88 aa)). A Phosphoserine modification is found at serine 6. Glutathione is bound by residues 11 to 12 (YW), 50 to 54 (WLDVK), 63 to 64 (NL), and 76 to 77 (QS). Residues 94–212 (TEEEKIRVDI…QSDRCFKMPI (119 aa)) enclose the GST C-terminal domain. Tyrosine 120 lines the substrate pocket.

Belongs to the GST superfamily. Mu family. Homodimer. In terms of processing, the N-terminus is blocked. As to expression, expressed in testis and brain. Very low expression in liver, kidney, heart and lung.

The protein resides in the cytoplasm. It carries out the reaction RX + glutathione = an S-substituted glutathione + a halide anion + H(+). Its function is as follows. Conjugation of reduced glutathione to a wide number of exogenous and endogenous hydrophobic electrophiles. The protein is Glutathione S-transferase Mu 5 (Gstm5) of Rattus norvegicus (Rat).